Consider the following 78-residue polypeptide: Ferredoxin (78 aa).

4Fe-4S ferredoxin-type domains follow at residues 2–29 and 30–59; these read FVITSPCIGEKAADCVETCPVDAIHEGP and DQYYIDPDLCIDCAACEPVCPVNAIYQEEF. [3Fe-4S] cluster contacts are provided by C8 and C16. [4Fe-4S] cluster is bound by residues C20, C39, C42, and C45. Residue C49 participates in [3Fe-4S] cluster binding.

[3Fe-4S] cluster serves as cofactor. Requires [4Fe-4S] cluster as cofactor.

Its function is as follows. Ferredoxins are iron-sulfur proteins that transfer electrons in a wide variety of metabolic reactions. The protein is Ferredoxin of Alicyclobacillus acidocaldarius subsp. acidocaldarius (Bacillus acidocaldarius).